Here is a 154-residue protein sequence, read N- to C-terminus: SsrA-binding protein (154 aa).

Belongs to the SmpB family.

The protein localises to the cytoplasm. In terms of biological role, required for rescue of stalled ribosomes mediated by trans-translation. Binds to transfer-messenger RNA (tmRNA), required for stable association of tmRNA with ribosomes. tmRNA and SmpB together mimic tRNA shape, replacing the anticodon stem-loop with SmpB. tmRNA is encoded by the ssrA gene; the 2 termini fold to resemble tRNA(Ala) and it encodes a 'tag peptide', a short internal open reading frame. During trans-translation Ala-aminoacylated tmRNA acts like a tRNA, entering the A-site of stalled ribosomes, displacing the stalled mRNA. The ribosome then switches to translate the ORF on the tmRNA; the nascent peptide is terminated with the 'tag peptide' encoded by the tmRNA and targeted for degradation. The ribosome is freed to recommence translation, which seems to be the essential function of trans-translation. In Gluconacetobacter diazotrophicus (strain ATCC 49037 / DSM 5601 / CCUG 37298 / CIP 103539 / LMG 7603 / PAl5), this protein is SsrA-binding protein.